Consider the following 384-residue polypeptide: 1-deoxy-D-xylulose 5-phosphate reductoisomerase (384 aa).

Residues T10, G11, S12, I13, G36, and N123 each contribute to the NADPH site. Position 124 (K124) interacts with 1-deoxy-D-xylulose 5-phosphate. Position 125 (E125) interacts with NADPH. Mn(2+) is bound at residue D149. Positions 150, 151, 175, and 198 each coordinate 1-deoxy-D-xylulose 5-phosphate. E151 serves as a coordination point for Mn(2+). G204 contributes to the NADPH binding site. 1-deoxy-D-xylulose 5-phosphate-binding residues include S211, N216, K217, and E220. Position 220 (E220) interacts with Mn(2+).

It belongs to the DXR family. Mg(2+) is required as a cofactor. It depends on Mn(2+) as a cofactor.

The catalysed reaction is 2-C-methyl-D-erythritol 4-phosphate + NADP(+) = 1-deoxy-D-xylulose 5-phosphate + NADPH + H(+). The protein operates within isoprenoid biosynthesis; isopentenyl diphosphate biosynthesis via DXP pathway; isopentenyl diphosphate from 1-deoxy-D-xylulose 5-phosphate: step 1/6. Catalyzes the NADPH-dependent rearrangement and reduction of 1-deoxy-D-xylulose-5-phosphate (DXP) to 2-C-methyl-D-erythritol 4-phosphate (MEP). The sequence is that of 1-deoxy-D-xylulose 5-phosphate reductoisomerase from Chlorobium phaeovibrioides (strain DSM 265 / 1930) (Prosthecochloris vibrioformis (strain DSM 265)).